The chain runs to 101 residues: Putative septation protein SpoVG (101 aa).

The disordered stretch occupies residues 82–101 (ELKKGGAAPARATGTDPHED).

It belongs to the SpoVG family.

Functionally, could be involved in septation. The polypeptide is Putative septation protein SpoVG (Anaeromyxobacter dehalogenans (strain 2CP-1 / ATCC BAA-258)).